The primary structure comprises 263 residues: Mediator of RNA polymerase II transcription subunit 4 (263 aa).

Residues 62–106 (QLAAEQAGIEKKMDGLREQVKEQDEEINQLQKQLKEAEHILATSI) adopt a coiled-coil conformation. The interval 221-263 (LHMTMGAGAGSVSLDTRSHKDASQDDVEVMSTDSSSSSSSDSQ) is disordered. The segment covering 251 to 263 (STDSSSSSSSDSQ) has biased composition (low complexity).

It belongs to the Mediator complex subunit 4 family. As to quaternary structure, component of the Mediator complex.

The protein resides in the nucleus. Its function is as follows. Component of the Mediator complex, a coactivator involved in the regulated transcription of nearly all RNA polymerase II-dependent genes. Mediator functions as a bridge to convey information from gene-specific regulatory proteins to the basal RNA polymerase II transcription machinery. Mediator is recruited to promoters by direct interactions with regulatory proteins and serves as a scaffold for the assembly of a functional preinitiation complex with RNA polymerase II and the general transcription factors. The sequence is that of Mediator of RNA polymerase II transcription subunit 4 (MED4) from Aedes aegypti (Yellowfever mosquito).